A 63-amino-acid polypeptide reads, in one-letter code: Large ribosomal subunit protein uL29 (63 aa).

This sequence belongs to the universal ribosomal protein uL29 family.

The polypeptide is Large ribosomal subunit protein uL29 (Pectobacterium carotovorum subsp. carotovorum (strain PC1)).